The chain runs to 156 residues: 6,7-dimethyl-8-ribityllumazine synthase (156 aa).

5-amino-6-(D-ribitylamino)uracil-binding positions include Phe22, 57-59 (AYE), and 81-83 (SVI). 86 to 87 (GT) is a binding site for (2S)-2-hydroxy-3-oxobutyl phosphate. The Proton donor role is filled by His89. Phe114 is a binding site for 5-amino-6-(D-ribitylamino)uracil. Residue Arg128 coordinates (2S)-2-hydroxy-3-oxobutyl phosphate.

It belongs to the DMRL synthase family. In terms of assembly, forms an icosahedral capsid composed of 60 subunits, arranged as a dodecamer of pentamers.

It catalyses the reaction (2S)-2-hydroxy-3-oxobutyl phosphate + 5-amino-6-(D-ribitylamino)uracil = 6,7-dimethyl-8-(1-D-ribityl)lumazine + phosphate + 2 H2O + H(+). It participates in cofactor biosynthesis; riboflavin biosynthesis; riboflavin from 2-hydroxy-3-oxobutyl phosphate and 5-amino-6-(D-ribitylamino)uracil: step 1/2. Catalyzes the formation of 6,7-dimethyl-8-ribityllumazine by condensation of 5-amino-6-(D-ribitylamino)uracil with 3,4-dihydroxy-2-butanone 4-phosphate. This is the penultimate step in the biosynthesis of riboflavin. This Photobacterium leiognathi protein is 6,7-dimethyl-8-ribityllumazine synthase.